The chain runs to 293 residues: Nucleotide-binding protein BC_5156 (293 aa).

ATP is bound at residue Gly-14–Thr-21. Asp-65–Gly-68 serves as a coordination point for GTP.

This sequence belongs to the RapZ-like family.

In terms of biological role, displays ATPase and GTPase activities. The sequence is that of Nucleotide-binding protein BC_5156 from Bacillus cereus (strain ATCC 14579 / DSM 31 / CCUG 7414 / JCM 2152 / NBRC 15305 / NCIMB 9373 / NCTC 2599 / NRRL B-3711).